The following is a 432-amino-acid chain: Histidine--tRNA ligase (432 aa).

Residues 412–432 form a disordered region; it reads TQVPLAAFPPEEGRPTYDDYA. The segment covering 422-432 has biased composition (basic and acidic residues); sequence EEGRPTYDDYA.

This sequence belongs to the class-II aminoacyl-tRNA synthetase family.

The protein localises to the cytoplasm. It carries out the reaction tRNA(His) + L-histidine + ATP = L-histidyl-tRNA(His) + AMP + diphosphate + H(+). The sequence is that of Histidine--tRNA ligase from Natronomonas pharaonis (strain ATCC 35678 / DSM 2160 / CIP 103997 / JCM 8858 / NBRC 14720 / NCIMB 2260 / Gabara) (Halobacterium pharaonis).